The sequence spans 231 residues: Non-fluorescent flavoprotein (231 aa).

It belongs to the bacterial luciferase oxidoreductase family. Homodimer. Requires FMN as cofactor.

The protein is Non-fluorescent flavoprotein (luxF) of Photobacterium phosphoreum.